The primary structure comprises 351 residues: Protein RecA (351 aa).

67–74 (GPESSGKT) is a binding site for ATP.

Belongs to the RecA family.

Its subcellular location is the cytoplasm. Its function is as follows. Can catalyze the hydrolysis of ATP in the presence of single-stranded DNA, the ATP-dependent uptake of single-stranded DNA by duplex DNA, and the ATP-dependent hybridization of homologous single-stranded DNAs. It interacts with LexA causing its activation and leading to its autocatalytic cleavage. The polypeptide is Protein RecA (Mannheimia succiniciproducens (strain KCTC 0769BP / MBEL55E)).